The primary structure comprises 129 residues: Small ribosomal subunit protein uS11 (129 aa).

This sequence belongs to the universal ribosomal protein uS11 family. As to quaternary structure, part of the 30S ribosomal subunit. Interacts with proteins S7 and S18. Binds to IF-3.

Its function is as follows. Located on the platform of the 30S subunit, it bridges several disparate RNA helices of the 16S rRNA. Forms part of the Shine-Dalgarno cleft in the 70S ribosome. In Staphylococcus haemolyticus (strain JCSC1435), this protein is Small ribosomal subunit protein uS11.